A 642-amino-acid polypeptide reads, in one-letter code: MSEIVVTLPDGSELEMESGSTVEDVAYEIGPGLGDDTVAGVVDGELVDKAEQLTDDCELVIVTDQSDEYLQVLRHSAAHVFAQALQRLHPEAKLAIGPPTEEGFYYDVTGVDLDADDLEAIEAEMETIIEADHDIERAERSREEAFEIYEDNPYKRDILETEAADEDPVSFYTQDDWQDLCQGPHVDSTGEIGAVELLNIAAAYWRGDEDNETLTRVYGTAFESESDLEGFLQRREEAKKRDHRKLGQELDLFSIPDVTGPGLPLYHPNGKAVLRELEDFVDQLNDDQGYEFVETPHLFRTELWKQSGHYENYVDDMFLLDVNDEEYGLKPMNCPGHATIFNQGNWSYRDLPVRYAENGKVYRKEQRGELSGLSRVWAFTIDDGHLFVERDAIEQEVNVIMDQIEEVLDTFDLDYEVALATRPEKSVGSDEIWEQAQTQLRSVLESSGMDYDIESGDGAFYGPKIDFAFEDALGRNWDGPTVQLDFNMPERFDLTYTGEDNEEHRPVMIHRALYGSYERFFMVLIEHFDGNFPTWLAPEQVRILPVSDDNIGYAKQLKNRYLDDFRVEIEDRSWTVGKKIQTAHDDRVPYMLVVGDNEEEAGTVSVRDRFEDERKDVDVETFRDHLASEVEEKRVEPDFVDE.

The TGS domain maps to Met1–Thr63. The catalytic stretch occupies residues Asp242–Pro533. The Zn(2+) site is built by Cys334, His385, and His510.

It belongs to the class-II aminoacyl-tRNA synthetase family. As to quaternary structure, homodimer. It depends on Zn(2+) as a cofactor.

It is found in the cytoplasm. It catalyses the reaction tRNA(Thr) + L-threonine + ATP = L-threonyl-tRNA(Thr) + AMP + diphosphate + H(+). In terms of biological role, catalyzes the attachment of threonine to tRNA(Thr) in a two-step reaction: L-threonine is first activated by ATP to form Thr-AMP and then transferred to the acceptor end of tRNA(Thr). The chain is Threonine--tRNA ligase from Natronomonas pharaonis (strain ATCC 35678 / DSM 2160 / CIP 103997 / JCM 8858 / NBRC 14720 / NCIMB 2260 / Gabara) (Halobacterium pharaonis).